The following is a 392-amino-acid chain: General receptor for phosphoinositides 1-associated scaffold protein (392 aa).

A disordered region spans residues 1–50 (MTLRRLRKLQQKEEATAAPDPAGRAPDSEAARAAPLPSGPPAAAAPPGAP). A compositionally biased stretch (pro residues) spans 37 to 49 (PSGPPAAAAPPGA). Threonine 76 carries the phosphothreonine modification. Serine 93 carries the phosphoserine modification. The PDZ domain maps to 100–189 (VLTLEKGDNQ…VLRLETLYGT (90 aa)). The segment at 180–257 (VLRLETLYGT…GAGLLPGSLP (78 aa)) is interaction with PSCD3. A Phosphotyrosine modification is found at tyrosine 236. Arginine 269 is modified (omega-N-methylarginine). Positions 294–315 (PQALPPPPPPARALGPSSAETP) are disordered. Serine 384 carries the phosphoserine modification.

In terms of assembly, heteromer. Composed of TAMALIN, CYTH2 and at least one GRM1. Also interacts with GRM2, GRM3 and GRM5. Interacts with CYTH3. In terms of tissue distribution, highly expressed in brain, heart and lung, and to a lower extent in embryo, kidney and ovary.

The protein resides in the cytoplasm. It is found in the perinuclear region. Its subcellular location is the cell membrane. It localises to the postsynaptic cell membrane. Functionally, plays a role in intracellular trafficking and contributes to the macromolecular organization of group 1 metabotropic glutamate receptors (mGluRs) at synapses. This chain is General receptor for phosphoinositides 1-associated scaffold protein, found in Mus musculus (Mouse).